Consider the following 730-residue polypeptide: Cyclin-dependent kinase 12 (730 aa).

2 disordered regions span residues 1-230 (MEIS…APFS) and 246-283 (FSLS…IATR). Residues 9–21 (THERDRKGSYGHR) are compositionally biased toward basic and acidic residues. A compositionally biased stretch (polar residues) spans 57 to 67 (SISPQYKQRNW). Basic and acidic residues predominate over residues 75–94 (GRDRGRNDFSYRKKGKDYNK). Basic residues-rich tracts occupy residues 95–122 (RRDK…KRRN) and 151–163 (KSKK…RKHS). Low complexity predominate over residues 194–203 (FNINPFQPMF). Residues 204–230 (SQPPPPPLPPNSQFMTPPPRPPPAPFS) are compositionally biased toward pro residues. Positions 313–605 (MLDQIGEGTY…AKEALNHPWI (293 aa)) constitute a Protein kinase domain. Residues 317 to 325 (IGEGTYGQV), K340, and 398 to 403 (EYVDHD) each bind ATP. The active-site Proton acceptor is D444. The interval 623-730 (DCHEMWSKKQ…QSQYQSVFFK (108 aa)) is disordered. Residue H625 participates in ATP binding. Over residues 676-688 (NHHHHHHHSHHHA) the composition is skewed to basic residues. A compositionally biased stretch (polar residues) spans 714 to 730 (NNHQPVPQSQYQSVFFK).

Belongs to the protein kinase superfamily. CMGC Ser/Thr protein kinase family. CDC2/CDKX subfamily.

It is found in the nucleus. The enzyme catalyses [DNA-directed RNA polymerase] + ATP = phospho-[DNA-directed RNA polymerase] + ADP + H(+). The catalysed reaction is L-seryl-[protein] + ATP = O-phospho-L-seryl-[protein] + ADP + H(+). It catalyses the reaction L-threonyl-[protein] + ATP = O-phospho-L-threonyl-[protein] + ADP + H(+). Functionally, cyclin-dependent kinase which displays CTD kinase activity: hyperphosphorylates 'Ser-2' in the C-terminal heptapeptide repeat domain (CTD) of the largest RNA polymerase II subunit, thereby acting as a key regulator of transcription elongation. Required for normal reproduction. The sequence is that of Cyclin-dependent kinase 12 from Caenorhabditis elegans.